Here is a 571-residue protein sequence, read N- to C-terminus: L-erythrulose 1-kinase (571 aa).

The DhaK domain occupies 7–331; it reads SPDDFADEAV…WTAPVETPAY (325 aa). His217 functions as the Tele-hemiaminal-histidine intermediate in the catalytic mechanism. A DhaL domain is found at 367-567; sequence RNIVAVLETF…FAMLMKALGE (201 aa). ATP is bound by residues 396–402, 442–443, Gly484, Arg539, and 552–554; these read DGDHGQG, TS, and DPG.

It catalyses the reaction L-erythrulose + ATP = L-erythrulose 1-phosphate + ADP + H(+). The protein operates within carbohydrate metabolism; L-threitol degradation. Kinase that has a preference for L-erythrulose, producing L-erythrulose-1P. Involved in the degradation pathway of L-threitol, that allows M.smegmatis to grow on this compound as the sole carbon source. Is also able to phosphorylate D-erythrulose and dihydroxyacetone in vitro. The polypeptide is L-erythrulose 1-kinase (Mycolicibacterium smegmatis (strain ATCC 700084 / mc(2)155) (Mycobacterium smegmatis)).